We begin with the raw amino-acid sequence, 298 residues long: Leucine-rich repeat-containing protein 55 (298 aa).

The first 34 residues, 1–34 (MGDTWAQLPWPGPPHSALLLVFFLLAAGVMHSDA), serve as a signal peptide directing secretion. The region spanning 35–65 (GTSCPVLCTCRNQVVDCSNQRLFSVPPDLPM) is the LRRNT domain. Cystine bridges form between cysteine 38/cysteine 44 and cysteine 42/cysteine 51. LRR repeat units lie at residues 66–87 (DTRN…YLTC), 90–111 (ELRV…LFLH), 114–135 (RLAH…MFRE), 138–160 (GLVH…AFQG), and 163–186 (HLRD…EGLP). The region spanning 196–251 (NPWVCGCTMEPLLKWLRNRIQRCTADSQLAECRGPPEVEGAPLFSLTEESFKACHL) is the LRRCT domain. Disulfide bonds link cysteine 200–cysteine 227 and cysteine 202–cysteine 249. Residues 259-279 (LFIAFVGFVVSIASVATNFLL) traverse the membrane as a helical segment.

As to quaternary structure, interacts with KCNMA1.

The protein localises to the cell membrane. Its function is as follows. Auxiliary protein of the large-conductance, voltage and calcium-activated potassium channel (BK alpha). Modulates gating properties by producing a marked shift in the BK channel's voltage dependence of activation in the hyperpolarizing direction, and in the absence of calcium. In Mus musculus (Mouse), this protein is Leucine-rich repeat-containing protein 55 (Lrrc55).